A 307-amino-acid chain; its full sequence is 4-hydroxythreonine-4-phosphate dehydrogenase (307 aa).

The substrate site is built by H126 and T127. A divalent metal cation-binding residues include H156, H195, and H251. 3 residues coordinate substrate: K259, N268, and R277.

It belongs to the PdxA family. Homodimer. Zn(2+) serves as cofactor. Requires Mg(2+) as cofactor. The cofactor is Co(2+).

The protein localises to the cytoplasm. It carries out the reaction 4-(phosphooxy)-L-threonine + NAD(+) = 3-amino-2-oxopropyl phosphate + CO2 + NADH. It participates in cofactor biosynthesis; pyridoxine 5'-phosphate biosynthesis; pyridoxine 5'-phosphate from D-erythrose 4-phosphate: step 4/5. Catalyzes the NAD(P)-dependent oxidation of 4-(phosphooxy)-L-threonine (HTP) into 2-amino-3-oxo-4-(phosphooxy)butyric acid which spontaneously decarboxylates to form 3-amino-2-oxopropyl phosphate (AHAP). This Helicobacter pylori (strain P12) protein is 4-hydroxythreonine-4-phosphate dehydrogenase.